Reading from the N-terminus, the 156-residue chain is Ribosomal RNA large subunit methyltransferase H (156 aa).

S-adenosyl-L-methionine-binding positions include Leu73, Gly104, and 123-128; that span reads LSPLTL.

It belongs to the RNA methyltransferase RlmH family. Homodimer.

It is found in the cytoplasm. The enzyme catalyses pseudouridine(1915) in 23S rRNA + S-adenosyl-L-methionine = N(3)-methylpseudouridine(1915) in 23S rRNA + S-adenosyl-L-homocysteine + H(+). Specifically methylates the pseudouridine at position 1915 (m3Psi1915) in 23S rRNA. This Aliivibrio fischeri (strain MJ11) (Vibrio fischeri) protein is Ribosomal RNA large subunit methyltransferase H.